The sequence spans 424 residues: Glutamyl-tRNA reductase (424 aa).

Substrate-binding positions include 49 to 52, Ser109, 114 to 116, and Gln120; these read TCNR and EDQ. The active-site Nucleophile is Cys50. 189 to 194 is a binding site for NADP(+); the sequence is GFGKMS.

It belongs to the glutamyl-tRNA reductase family. In terms of assembly, homodimer.

It catalyses the reaction (S)-4-amino-5-oxopentanoate + tRNA(Glu) + NADP(+) = L-glutamyl-tRNA(Glu) + NADPH + H(+). The protein operates within porphyrin-containing compound metabolism; protoporphyrin-IX biosynthesis; 5-aminolevulinate from L-glutamyl-tRNA(Glu): step 1/2. Its function is as follows. Catalyzes the NADPH-dependent reduction of glutamyl-tRNA(Glu) to glutamate 1-semialdehyde (GSA). This is Glutamyl-tRNA reductase from Alkaliphilus metalliredigens (strain QYMF).